We begin with the raw amino-acid sequence, 93 residues long: UPF0223 protein gbs1030 (93 aa).

This sequence belongs to the UPF0223 family.

The chain is UPF0223 protein gbs1030 from Streptococcus agalactiae serotype III (strain NEM316).